We begin with the raw amino-acid sequence, 3165 residues long: Protein eyes shut homolog (3165 aa).

Positions 1-21 (MTDKSIVILSLMVFHSSFING) are cleaved as a signal peptide. A glycan (N-linked (GlcNAc...) asparagine) is linked at Asn-166. EGF-like domains lie at 170–212 (KQQF…KYCQ), 213–254 (ELDA…KNCS), and 256–292 (IIGQ…PFCE). Intrachain disulfides connect Cys-174–Cys-189, Cys-183–Cys-200, Cys-202–Cys-211, Cys-217–Cys-228, Cys-222–Cys-242, Cys-244–Cys-253, Cys-260–Cys-270, Cys-265–Cys-280, and Cys-282–Cys-291. Residues Asn-269 and Asn-272 are each glycosylated (N-linked (GlcNAc...) asparagine). N-linked (GlcNAc...) asparagine glycosylation is found at Asn-311 and Asn-343. EGF-like domains follow at residues 332–368 (DVSE…LLCK) and 370–406 (IQTS…KNCE). 4 disulfide bridges follow: Cys-341–Cys-356, Cys-358–Cys-367, Cys-374–Cys-385, and Cys-396–Cys-405. Asn-506 and Asn-566 each carry an N-linked (GlcNAc...) asparagine glycan. EGF-like domains lie at 567–602 (TTDD…RLCV) and 643–679 (DTED…TQCE). 46 disulfide bridges follow: Cys-575/Cys-590, Cys-592/Cys-601, Cys-669/Cys-678, Cys-685/Cys-696, Cys-690/Cys-705, Cys-707/Cys-719, Cys-737/Cys-748, Cys-742/Cys-757, Cys-759/Cys-768, Cys-775/Cys-786, Cys-780/Cys-795, Cys-797/Cys-806, Cys-813/Cys-824, Cys-818/Cys-835, Cys-837/Cys-846, Cys-853/Cys-866, Cys-860/Cys-876, Cys-878/Cys-887, Cys-894/Cys-905, Cys-899/Cys-914, Cys-916/Cys-925, Cys-932/Cys-943, Cys-937/Cys-952, Cys-954/Cys-963, Cys-970/Cys-981, Cys-975/Cys-990, Cys-992/Cys-1001, Cys-1008/Cys-1019, Cys-1013/Cys-1028, Cys-1030/Cys-1039, Cys-1046/Cys-1056, Cys-1051/Cys-1065, Cys-1067/Cys-1076, Cys-1083/Cys-1094, Cys-1088/Cys-1103, Cys-1105/Cys-1114, Cys-1121/Cys-1137, Cys-1131/Cys-1147, Cys-1149/Cys-1158, Cys-1165/Cys-1176, Cys-1170/Cys-1185, Cys-1187/Cys-1196, Cys-2037/Cys-2063, Cys-2103/Cys-2114, Cys-2108/Cys-2128, and Cys-2130/Cys-2139. The EGF-like 8; calcium-binding domain maps to 681–720 (DIDECASHPCKNGATCIDQPGNYFCQCVPPFKVVDGFSCL). The region spanning 733–769 (DIDDCILNACEHNSTCKDLHLSYQCVCLSDWEGNFCE) is the EGF-like 9; calcium-binding domain. Residues 771 to 807 (ESNECKMNPCKNNSTCTDLYKSYRCECTSGWTGQNCS) form the EGF-like 10; calcium-binding domain. 3 consecutive EGF-like domains span residues 809-847 (EINE…QFCH), 849-888 (RYNL…KNCE), and 890-926 (DVKD…SLCE). In terms of domain architecture, EGF-like 14; calcium-binding spans 928 to 964 (EINECSSEPCKNNGTCVDLTNRFFCNCEPEYHGPFCE). An EGF-like 15 domain is found at 966 to 1002 (DVNKCKISPCLDEENCVYRTDGYNCLCAPGYTGINCE). The 37-residue stretch at 1004–1040 (NLDECLSEPCLHDGVCIDGINHYTCDCKSGFFGTHCE) folds into the EGF-like 16; calcium-binding domain. 3 consecutive EGF-like domains span residues 1042–1077 (NAND…TQCK), 1079–1115 (KIND…AYCE), and 1117–1159 (SIDN…QFCE). An EGF-like 20; calcium-binding domain is found at 1161–1197 (NINECSSSPCLHGADCEDHINGYVCKCQPGWSGHHCE). Residues 1883-2063 (FSCVRYYGDS…AVKNYHINNC (181 aa)) form the Laminin G-like 1 domain. Positions 2099-2140 (APSVCQQDVCHNGGTCHAIFLSSGIVSFQCDCPLHFTGRFCE) constitute an EGF-like 21 domain. Positions 2145–2339 (LFFPSFNGNS…NIENCHVPWC (195 aa)) constitute a Laminin G-like 2 domain. Asn-2170 carries an N-linked (GlcNAc...) asparagine glycan. 2 consecutive EGF-like domains span residues 2335–2368 (HVPW…YSGK) and 2371–2408 (QFAS…PLCT). 19 disulfides stabilise this stretch: Cys-2339–Cys-2350, Cys-2344–Cys-2359, Cys-2375–Cys-2386, Cys-2380–Cys-2396, Cys-2398–Cys-2407, Cys-2576–Cys-2609, Cys-2614–Cys-2625, Cys-2619–Cys-2634, Cys-2636–Cys-2645, Cys-2652–Cys-2668, Cys-2662–Cys-2677, Cys-2679–Cys-2688, Cys-2868–Cys-2895, Cys-2900–Cys-2911, Cys-2905–Cys-2920, Cys-2922–Cys-2931, Cys-2937–Cys-2948, Cys-2942–Cys-2958, and Cys-2960–Cys-2969. In terms of domain architecture, Laminin G-like 3 spans 2419-2609 (SGTDAFGYTS…PNAGRSVGQC (191 aa)). 2 EGF-like domains span residues 2610–2646 (HASP…SFCT) and 2648–2689 (TVST…IYCE). Residues 2717 to 2895 (DPSFRSNELS…AKGGSNVGDC (179 aa)) enclose the Laminin G-like 4 domain. 2 consecutive EGF-like domains span residues 2896–2932 (DGTA…NTCN) and 2933–2970 (QSVS…RYCE). The 191-residue stretch at 2975 to 3165 (FSTAKFMGNS…YDGDEQNEVT (191 aa)) folds into the Laminin G-like 5 domain.

The protein belongs to the EYS family. In terms of tissue distribution, expressed in retina (at protein level). Isoform 1: Detected in retina. Isoform 2: Detected in retina. Isoform 3: Strongly expressed in retina and testis. Isoform 4: Strongly expressed in testis, and weakly expressed in retina.

The protein localises to the cell projection. It localises to the cilium. It is found in the photoreceptor outer segment. The protein resides in the cytoplasm. Its subcellular location is the cytoskeleton. The protein localises to the cilium axoneme. It localises to the microtubule organizing center. It is found in the centrosome. The protein resides in the secreted. Its subcellular location is the extracellular space. The protein localises to the extracellular matrix. It localises to the interphotoreceptor matrix. Required to maintain the integrity of photoreceptor cells. Specifically required for normal morphology of the photoreceptor ciliary pocket, and might thus facilitate protein trafficking between the photoreceptor inner and outer segments via the transition zone. The chain is Protein eyes shut homolog (EYS) from Homo sapiens (Human).